The primary structure comprises 89 residues: Alpha-ketoglutarate dehydrogenase subunit 4, mitochondrial (89 aa).

This sequence belongs to the alpha-ketoglutarate dehydrogenase component 4 family. Component of the 2-oxoglutarate dehydrogenase complex (OGDC), also called alpha-ketoglutarate dehydrogenase (KGDH) complex. The copmplex is composed of the catalytic subunits OGDH (2-oxoglutarate dehydrogenase kgd1; also called E1 subunit), DLST (dihydrolipoamide succinyltransferase kgd2; also called E2 subunit) and DLD (dihydrolipoamide dehydrogenase dld1; also called E3 subunit), and the assembly factor KGD4. Within OGDC, interacts (via N-terminus) with E3 subunit and (via C-terminus) with the complex core formed by E1 and E2 subunits.

Its subcellular location is the mitochondrion. Molecular adapter that is necessary to a form a stable 2-oxoglutarate dehydrogenase enzyme complex (OGDC). Required for incorporation of the E3 subunit (dld1) into the E1-E2 core (kgd1-kgd2) of mitochondrial OGDC, and acting as a stability factor for the fully assembled complex. This is Alpha-ketoglutarate dehydrogenase subunit 4, mitochondrial (kgd4) from Schizosaccharomyces pombe (strain 972 / ATCC 24843) (Fission yeast).